The sequence spans 1274 residues: Meiosis inhibitor protein 1 (1274 aa).

As to expression, expressed predominantly in testis. Weakly expressed in spleen and thymus. Expressed in the ovaries, Fallopian tubes and uterus.

In terms of biological role, required for normal meiotic chromosome synapsis. May be involved in the formation of meiotic double-strand breaks (DSBs) in spermatocytes. The chain is Meiosis inhibitor protein 1 from Homo sapiens (Human).